A 204-amino-acid chain; its full sequence is Pneumococcal vaccine antigen A (204 aa).

Its subcellular location is the cell surface. This Streptococcus pneumoniae serotype 4 (strain ATCC BAA-334 / TIGR4) protein is Pneumococcal vaccine antigen A (pvaA).